The following is a 933-amino-acid chain: Phosphoenolpyruvate carboxylase (933 aa).

Catalysis depends on residues H164 and K595.

Belongs to the PEPCase type 1 family. Mg(2+) serves as cofactor.

It catalyses the reaction oxaloacetate + phosphate = phosphoenolpyruvate + hydrogencarbonate. Forms oxaloacetate, a four-carbon dicarboxylic acid source for the tricarboxylic acid cycle. This chain is Phosphoenolpyruvate carboxylase, found in Rhodopseudomonas palustris (strain BisB5).